The primary structure comprises 162 residues: Endoribonuclease YbeY (162 aa).

Zn(2+)-binding residues include histidine 117, histidine 121, and histidine 127.

The protein belongs to the endoribonuclease YbeY family. Requires Zn(2+) as cofactor.

It localises to the cytoplasm. Functionally, single strand-specific metallo-endoribonuclease involved in late-stage 70S ribosome quality control and in maturation of the 3' terminus of the 16S rRNA. This Francisella tularensis subsp. novicida (strain U112) protein is Endoribonuclease YbeY.